The following is a 104-amino-acid chain: BLOC-1-related complex subunit 7 (104 aa).

This sequence belongs to the BORCS7 family.

It is found in the lysosome membrane. Functionally, as part of a BORC-like complex may play a role in lysosomes movement and localization at the cell periphery. Associated with the cytosolic face of lysosomes, this complex may couple lysosomes to microtubule plus-end-directed kinesin motor. This is BLOC-1-related complex subunit 7 from Xenopus tropicalis (Western clawed frog).